Here is a 309-residue protein sequence, read N- to C-terminus: Protease HtpX homolog (309 aa).

The next 2 helical transmembrane spans lie at 15–35 and 54–74; these read NAVL…VDVI and IFPT…VVCI. Residue histidine 165 participates in Zn(2+) binding. Glutamate 166 is a catalytic residue. Histidine 169 provides a ligand contact to Zn(2+). Helical transmembrane passes span 181–201 and 213–233; these read VGIL…FFMG and MILL…QMYL. Glutamate 238 is a Zn(2+) binding site.

It belongs to the peptidase M48B family. Zn(2+) is required as a cofactor.

It is found in the cell inner membrane. This is Protease HtpX homolog from Helicobacter acinonychis (strain Sheeba).